We begin with the raw amino-acid sequence, 591 residues long: V-type ATP synthase alpha chain (591 aa).

232 to 239 (GPFGAGKT) provides a ligand contact to ATP.

This sequence belongs to the ATPase alpha/beta chains family.

The catalysed reaction is ATP + H2O + 4 H(+)(in) = ADP + phosphate + 5 H(+)(out). Functionally, produces ATP from ADP in the presence of a proton gradient across the membrane. The V-type alpha chain is a catalytic subunit. The chain is V-type ATP synthase alpha chain from Nitrosococcus oceani (strain ATCC 19707 / BCRC 17464 / JCM 30415 / NCIMB 11848 / C-107).